The sequence spans 425 residues: Dihydroorotase (425 aa).

Zn(2+) contacts are provided by H61 and H63. Residues 63–65 (HLR) and N95 each bind substrate. The Zn(2+) site is built by D153, H180, and H233. N279 provides a ligand contact to substrate. A Zn(2+)-binding site is contributed by D306. D306 is an active-site residue. Position 310 (H310) interacts with substrate.

The protein belongs to the metallo-dependent hydrolases superfamily. DHOase family. Class I DHOase subfamily. The cofactor is Zn(2+).

It catalyses the reaction (S)-dihydroorotate + H2O = N-carbamoyl-L-aspartate + H(+). Its pathway is pyrimidine metabolism; UMP biosynthesis via de novo pathway; (S)-dihydroorotate from bicarbonate: step 3/3. Catalyzes the reversible cyclization of carbamoyl aspartate to dihydroorotate. In Geobacter sp. (strain M21), this protein is Dihydroorotase.